The sequence spans 825 residues: Beta-glucosidase (825 aa).

Positions 1 to 20 (MLLPLYGLASFLVLSQAALV) are cleaved as a signal peptide. Residues Asn21, Asn74, Asn97, Asn230, and Asn271 are each glycosylated (N-linked (GlcNAc...) asparagine). Asp299 is a catalytic residue. N-linked (GlcNAc...) asparagine glycans are attached at residues Asn328, Asn335, Asn537, Asn550, Asn556, Asn578, Asn667, Asn690, Asn718, Asn733, and Asn761.

Belongs to the glycosyl hydrolase 3 family. As to quaternary structure, homotetramer.

It catalyses the reaction Hydrolysis of terminal, non-reducing beta-D-glucosyl residues with release of beta-D-glucose.. It functions in the pathway glycan metabolism; cellulose degradation. This Wickerhamomyces anomalus (Yeast) protein is Beta-glucosidase.